Consider the following 957-residue polypeptide: Serine-aspartate repeat-containing protein C (957 aa).

An N-terminal signal peptide occupies residues 1–50; it reads MNNKKTVTNRKGMIPNRLNKFSIRKYSVGTASILVGTTLIFGLSGHEAKA. Residues 51–166 are disordered; the sequence is AEHTNGELNQ…TPKTTTIKPR (116 aa). A ligand binding A region region spans residues 51-495; that stretch reads AEHTNGELNQ…GSSTANGDQK (445 aa). Residues 56-71 are compositionally biased toward polar residues; it reads GELNQSKNETTAPSEN. Over residues 72 to 83 the composition is skewed to basic and acidic residues; sequence KTTEKVDSRQLK. The span at 84–114 shows a compositional bias: polar residues; the sequence is DNTQTATADQPKVTMSDSATVKETSSNMQSP. The span at 115-132 shows a compositional bias: low complexity; sequence QNATASQSTTQTSNVTTN. Positions 133 to 164 are enriched in polar residues; the sequence is DKSSTTYSNETDKSNLTQAKDVSATPKTTTIK. CNA-B domains are found at residues 496 to 606 and 607 to 717; these read KYNL…YKTP and KYSL…EEET. Positions 678–937 are disordered; that stretch reads TQTGTNTTED…NNSNNGTLFG (260 aa). Acidic residues-rich tracts occupy residues 685–695 and 712–896; these read TEDDKDADGGE and YYEE…DSDS. Residues 920 to 924 carry the LPXTG sorting signal motif; that stretch reads LPETG. The segment covering 922–937 has biased composition (low complexity); sequence ETGSENNNSNNGTLFG. Thr923 bears the Pentaglycyl murein peptidoglycan amidated threonine mark. The propeptide at 924–957 is removed by sortase; it reads GSENNNSNNGTLFGGLFAALGSLLLFGRRKKQNK.

The protein belongs to the serine-aspartate repeat-containing protein (SDr) family. Homodimerizes; via N2-Domain. Interacts with host NRXN1; this interaction mediates bacterial attachment to host cells.

It localises to the secreted. The protein resides in the cell wall. Functionally, cell surface-associated calcium-binding protein which plays an important role in adhesion and pathogenesis. Mediates interactions with components of the extracellular matrix such as host NRXN1 to promote bacterial adhesion. The polypeptide is Serine-aspartate repeat-containing protein C (sdrC) (Staphylococcus aureus (strain MSSA476)).